The sequence spans 422 residues: Tyrosine--tRNA ligase 1 (422 aa).

Tyr35 contributes to the L-tyrosine binding site. The 'HIGH' region signature appears at 40 to 49; the sequence is PTADSLHIGH. L-tyrosine contacts are provided by Tyr170 and Gln174. The short motif at 232–236 is the 'KMSKS' region element; sequence KFGKT. Lys235 is a binding site for ATP. The 67-residue stretch at 355–421 folds into the S4 RNA-binding domain; that stretch reads LSLVDVLVQS…GKKKYFLVTY (67 aa).

The protein belongs to the class-I aminoacyl-tRNA synthetase family. TyrS type 1 subfamily. Homodimer.

It localises to the cytoplasm. The catalysed reaction is tRNA(Tyr) + L-tyrosine + ATP = L-tyrosyl-tRNA(Tyr) + AMP + diphosphate + H(+). Functionally, catalyzes the attachment of tyrosine to tRNA(Tyr) in a two-step reaction: tyrosine is first activated by ATP to form Tyr-AMP and then transferred to the acceptor end of tRNA(Tyr). The sequence is that of Tyrosine--tRNA ligase 1 from Bacillus subtilis (strain 168).